The primary structure comprises 926 residues: OTU domain-containing protein 7A (926 aa).

Serine 121 bears the Phosphoserine mark. The tract at residues 170-413 (ERDLIEQATM…AVDPGKDWEW (244 aa)) is TRAF-binding. The catalytic stretch occupies residues 185 to 452 (AGRLNWWSTV…VTWIRIPSET (268 aa)). The OTU domain occupies 201 to 377 (LLPLATTGDG…QAHFSALVSM (177 aa)). Residue aspartate 209 is part of the active site. The active-site Nucleophile is the cysteine 212. Histidine 370 serves as the catalytic Proton acceptor. Disordered stretches follow at residues 455–517 (PLAQ…DSVA), 540–615 (GLVH…GDAW), and 671–779 (EQEQ…ARQS). The segment covering 484–494 (VCSNSNSNNGK) has biased composition (low complexity). Basic and acidic residues predominate over residues 495–513 (NGKDKEKEKQRKDKDKTRA). The short motif at 497-512 (KDKEKEKQRKDKDKTR) is the Nuclear localization signal element. 3 stretches are compositionally biased toward low complexity: residues 579–595 (GASA…PSPT), 680–691 (AAAAAAATATAT), and 731–750 (SPGT…AASP). The segment covering 751–767 (GPGGGARRAAPGTGGPT) has biased composition (gly residues). Arginine 880 bears the Omega-N-methylarginine mark. The segment at 884-919 (GPAQRRCQRENCAFYGRAETEHFCSYCYREELRRRR) adopts an A20-type zinc-finger fold. Residues cysteine 890, cysteine 895, cysteine 907, and cysteine 910 each coordinate Zn(2+).

The protein belongs to the peptidase C64 family.

The protein localises to the cytoplasm. Its subcellular location is the nucleus. It catalyses the reaction Thiol-dependent hydrolysis of ester, thioester, amide, peptide and isopeptide bonds formed by the C-terminal Gly of ubiquitin (a 76-residue protein attached to proteins as an intracellular targeting signal).. Its function is as follows. Deubiquitinase, which cleaves 'Lys-11'-linked polyubiquitin chains. The sequence is that of OTU domain-containing protein 7A (Otud7a) from Mus musculus (Mouse).